Consider the following 420-residue polypeptide: Pectate lyase (420 aa).

The first 21 residues, 1–21, serve as a signal peptide directing secretion; the sequence is MKKVMLATALFLGLTPAGANA. Residues 117 to 139 form a disordered region; the sequence is TWGKKEPSGTQEEARARSQKNQK. Basic and acidic residues predominate over residues 119 to 132; it reads GKKEPSGTQEEARA. Ca(2+) contacts are provided by D205, D244, and D248. Residue R300 is part of the active site.

Belongs to the polysaccharide lyase 1 family. As to quaternary structure, monomer. The cofactor is Ca(2+).

It is found in the secreted. It catalyses the reaction Eliminative cleavage of (1-&gt;4)-alpha-D-galacturonan to give oligosaccharides with 4-deoxy-alpha-D-galact-4-enuronosyl groups at their non-reducing ends.. Its pathway is glycan metabolism; pectin degradation; 2-dehydro-3-deoxy-D-gluconate from pectin: step 2/5. In terms of biological role, produces unsaturated products from polygalacturonate. The polypeptide is Pectate lyase (pel) (Bacillus subtilis (strain 168)).